The following is a 424-amino-acid chain: uncharacterized protein (424 aa).

This is an uncharacterized protein from Orgyia pseudotsugata (Douglas-fir tussock moth).